Here is a 180-residue protein sequence, read N- to C-terminus: Cell division protein ZapC (180 aa).

Belongs to the ZapC family. Interacts directly with FtsZ.

It localises to the cytoplasm. Functionally, contributes to the efficiency of the cell division process by stabilizing the polymeric form of the cell division protein FtsZ. Acts by promoting interactions between FtsZ protofilaments and suppressing the GTPase activity of FtsZ. This is Cell division protein ZapC from Vibrio vulnificus (strain CMCP6).